The following is a 711-amino-acid chain: Polyribonucleotide nucleotidyltransferase (711 aa).

Mg(2+) contacts are provided by Asp-490 and Asp-496. A KH domain is found at 556-615; it reads PRIETMQIPTDKIREVIGSGGKVIREIVEVSGAKVDINDEGIIKIASPNGEAIKKAYDMI. An S1 motif domain is found at 625 to 693; the sequence is GMVYTGTVVK…DRGKVRLSMK (69 aa).

The protein belongs to the polyribonucleotide nucleotidyltransferase family. Requires Mg(2+) as cofactor.

Its subcellular location is the cytoplasm. The enzyme catalyses RNA(n+1) + phosphate = RNA(n) + a ribonucleoside 5'-diphosphate. In terms of biological role, involved in mRNA degradation. Catalyzes the phosphorolysis of single-stranded polyribonucleotides processively in the 3'- to 5'-direction. This is Polyribonucleotide nucleotidyltransferase from Roseobacter denitrificans (strain ATCC 33942 / OCh 114) (Erythrobacter sp. (strain OCh 114)).